The following is a 431-amino-acid chain: Na(+)/H(+) antiporter NhaA (431 aa).

A run of 11 helical transmembrane segments spans residues 33–53, 74–94, 112–132, 144–164, 173–193, 197–217, 225–245, 279–299, 311–331, 347–367, and 379–399; these read VGGALLLVAALAALVWANSPW, LSISAWAADGLLAIFFFVVGV, ALPIAAAVGGMIVPAVIFVGV, GWAIPVATDIAFALAVLAVIA, IFLLTLAVVDDLLAIIVIAVF, QLSFGPLAGALVTIAVFGLAV, FLLLPLAVVAWALMHASGVHA, FAVPVFAFFAAGVTVGGLSGF, VIAGLVLGKPIGVFLTTYVLA, VLGLALLAGIGFTVSLLIGEL, and AKIAVLTGSVLAGLLAAVVLL.

The protein belongs to the NhaA Na(+)/H(+) (TC 2.A.33) antiporter family.

Its subcellular location is the cell membrane. The catalysed reaction is Na(+)(in) + 2 H(+)(out) = Na(+)(out) + 2 H(+)(in). Its function is as follows. Na(+)/H(+) antiporter that extrudes sodium in exchange for external protons. This Mycolicibacterium smegmatis (strain ATCC 700084 / mc(2)155) (Mycobacterium smegmatis) protein is Na(+)/H(+) antiporter NhaA.